A 372-amino-acid polypeptide reads, in one-letter code: Ribosomal RNA small subunit methyltransferase H (372 aa).

Residues 78-80, D97, Y124, D148, and Q155 each bind S-adenosyl-L-methionine; that span reads GGH.

This sequence belongs to the methyltransferase superfamily. RsmH family.

Its subcellular location is the cytoplasm. The enzyme catalyses cytidine(1402) in 16S rRNA + S-adenosyl-L-methionine = N(4)-methylcytidine(1402) in 16S rRNA + S-adenosyl-L-homocysteine + H(+). Specifically methylates the N4 position of cytidine in position 1402 (C1402) of 16S rRNA. The protein is Ribosomal RNA small subunit methyltransferase H of Mycobacterium leprae (strain Br4923).